We begin with the raw amino-acid sequence, 63 residues long: Large ribosomal subunit protein uL29 (63 aa).

This sequence belongs to the universal ribosomal protein uL29 family.

This is Large ribosomal subunit protein uL29 from Pectobacterium carotovorum subsp. carotovorum (strain PC1).